Reading from the N-terminus, the 500-residue chain is Glucose-1-phosphate adenylyltransferase large subunit, chloroplastic/amyloplastic (500 aa).

Residues 1–33 constitute a chloroplast transit peptide; the sequence is RASPPSESRAPLRAPQRSATRQHQARQGPRRMC. The tract at residues 1-47 is disordered; it reads RASPPSESRAPLRAPQRSATRQHQARQGPRRMCNGGRGPPYWTAGVT.

Belongs to the bacterial/plant glucose-1-phosphate adenylyltransferase family. In terms of assembly, heterotetramer.

The protein resides in the plastid. It is found in the chloroplast. The protein localises to the amyloplast. The catalysed reaction is alpha-D-glucose 1-phosphate + ATP + H(+) = ADP-alpha-D-glucose + diphosphate. Its pathway is glycan biosynthesis; starch biosynthesis. Its activity is regulated as follows. Insensitive to 3'phosphoglycerate and orthophosphate. In terms of biological role, this protein plays a role in synthesis of starch. It catalyzes the synthesis of the activated glycosyl donor, ADP-glucose from Glc-1-P and ATP. This is Glucose-1-phosphate adenylyltransferase large subunit, chloroplastic/amyloplastic (AGA.7) from Triticum aestivum (Wheat).